A 453-amino-acid chain; its full sequence is Ribosome biogenesis protein YTM1 (453 aa).

The interval 19-102 (VKVRFFTNEE…ETVIDLQYTR (84 aa)) is ubiquitin-like (UBL) domain. Residues 112 to 453 (SFTNEDWISS…KKIDIYREAN (342 aa)) are sufficient for interaction with ERB1 and association with 66S pre-ribosomes. 7 WD repeats span residues 128 to 166 (GHGAVLASNMKLQESKILSGSYDGVVRTYNMSGEVESQY), 168 to 206 (GHSGPVKSVRWISPTRIVSAGNDHSLRLWKTKLAGVEEG), 218 to 257 (GHKGPVVDLAVDYKSNKIISAGNDSVVGVWSTNASDMSAV), 292 to 332 (GHGQ…CVDT), 334 to 373 (STGFSLLSILQLPNLHLVASGSSARHINLHDPRASSSTEQ), 380 to 420 (GHTN…AMYT), and 422 to 453 (GKGGKVFGVSWDPIGIVSGGEDKKIDIYREAN).

This sequence belongs to the WD repeat WDR12/YTM1 family. In terms of assembly, component of the NOP7 complex, composed of ERB1, NOP7 and YTM1. The complex is held together by ERB1, which interacts with NOP7 via its N-terminal domain and with YTM1 via a high-affinity interaction between the seven-bladed beta-propeller domains of the 2 proteins. The NOP7 complex associates with the 66S pre-ribosome. Interacts (via UBL domain) with MDN1 (via VWFA/MIDAS domain).

It localises to the nucleus. Its subcellular location is the nucleolus. The protein localises to the nucleoplasm. Its function is as follows. Component of the NOP7 complex, which is required for maturation of the 25S and 5.8S ribosomal RNAs and formation of the 60S ribosome. In Meyerozyma guilliermondii (strain ATCC 6260 / CBS 566 / DSM 6381 / JCM 1539 / NBRC 10279 / NRRL Y-324) (Yeast), this protein is Ribosome biogenesis protein YTM1.